Consider the following 257-residue polypeptide: Protein YIPF5 (257 aa).

Residues 1–124 (MSGFENLNTD…KVADGSIMNE (124 aa)) lie on the Cytoplasmic side of the membrane. The tract at residues 75–106 (PASPQPFYGNNFEDEPPLLEELGINFDHIWQK) is interaction with Sec23. Residues 125–145 (TDLAGPMVFCLAFGATLLLAG) form a helical membrane-spanning segment. Residue Lys146 is a topological domain, lumenal. A helical membrane pass occupies residues 147 to 167 (IQFGYVYGISAIGCLGMFCLL). Residues 168–173 (NLMSMT) are Cytoplasmic-facing. The helical transmembrane segment at 174-194 (GVSFGCVASVLGYCLLPMILL) threads the bilayer. At 195 to 196 (SS) the chain is on the lumenal side. A helical membrane pass occupies residues 197–217 (FAVIFSLQGMVGIILTAGIIG). At 218–236 (WCSFSASKIFISALAMEGQ) the chain is on the cytoplasmic side. The helical transmembrane segment at 237-257 (QLLVAYPCALLYGVFALISVF) threads the bilayer.

Belongs to the YIP1 family. As to quaternary structure, interacts with the COPII coat components Sec23 (SEC23A and/or SEC23B) and Sec24 (SEC24A and/or SEC24B). Interacts with YIF1A. May interact with RAB1A. Interacts with YIPF3 and YIPF4. Ubiquitously expressed with abundant expression in pancreatic tissue, islets, beta cells, and brain. Highly expressed in coronary smooth muscles.

It is found in the endoplasmic reticulum membrane. The protein resides in the golgi apparatus. Its subcellular location is the cis-Golgi network membrane. The protein localises to the cytoplasmic vesicle. It localises to the COPII-coated vesicle. Its function is as follows. Plays a role in transport between endoplasmic reticulum and Golgi. In pancreatic beta cells, required to transport proinsulin from endoplasmic reticulum into the Golgi. This Homo sapiens (Human) protein is Protein YIPF5.